A 394-amino-acid chain; its full sequence is Envelope glycoprotein D (394 aa).

The first 25 residues, 1-25 (MGGAAARLGAVILFVVIVGLHGVRG), serve as a signal peptide directing secretion. The tract at residues 25 to 57 (GKYALADASLKMADPNRFRGKDLPVPDRLTDPP) is interaction with TNFRSF14. Residues 26-339 (KYALADASLK…PYHPPATPNN (314 aa)) lie on the Virion surface side of the membrane. A Zn(2+)-binding site is contributed by His64. Cystine bridges form between Cys91–Cys214, Cys131–Cys227, and Cys143–Cys152. Asn119 and Asn146 each carry an N-linked (GlcNAc...) asparagine; by host glycan. Asp240 contributes to the Zn(2+) binding site. Residues 261–305 (LKIAGWHGPKAPYTSTLLPPELSETPNATQPELAPEDPEDSALLE) form a profusion region. Residues 275 to 301 (STLLPPELSETPNATQPELAPEDPEDS) form a disordered region. Asn287 carries N-linked (GlcNAc...) asparagine; by host glycosylation. The chain crosses the membrane as a helical span at residues 340 to 364 (MGLIAGAVGGSLLAALVICGIVYWM). The Intravirion segment spans residues 365-394 (RRRTQKGPKRIRLPHIREDDQPSSHQPLFY). Residues 374–394 (RIRLPHIREDDQPSSHQPLFY) form a disordered region.

The protein belongs to the herpesviridae glycoprotein D family. Homodimer. Interacts with host receptor TNFRSF14. Interacts with host receptor NECTIN1. Interacts (via profusion domain) with gB; this interaction occurs in the absence of gH/gL. Interacts (via profusion domain) with gH/gL heterodimer; this interaction occurs in the absence of gB. Associates with the gB-gH/gL-gD complex. Interacts (via C-terminus) with UL11 tegument protein. Interacts with host RSAD2.

It is found in the virion membrane. Its subcellular location is the host Golgi apparatus. Envelope glycoprotein that binds to the host cell entry receptors NECTIN1, TNFRSF14/HVEM and 3-O-sulfated heparan sulfate, promoting the virus entry into host cells. May trigger fusion with host membrane, by recruiting the fusion machinery composed of gB and gH/gL. In Homo sapiens (Human), this protein is Envelope glycoprotein D (gD).